A 292-amino-acid polypeptide reads, in one-letter code: 33 kDa chaperonin (292 aa).

Intrachain disulfides connect Cys236-Cys238 and Cys269-Cys272.

This sequence belongs to the HSP33 family. Post-translationally, under oxidizing conditions two disulfide bonds are formed involving the reactive cysteines. Under reducing conditions zinc is bound to the reactive cysteines and the protein is inactive.

The protein localises to the cytoplasm. Functionally, redox regulated molecular chaperone. Protects both thermally unfolding and oxidatively damaged proteins from irreversible aggregation. Plays an important role in the bacterial defense system toward oxidative stress. In Ruminiclostridium cellulolyticum (strain ATCC 35319 / DSM 5812 / JCM 6584 / H10) (Clostridium cellulolyticum), this protein is 33 kDa chaperonin.